The chain runs to 203 residues: Small ribosomal subunit protein uS4 (203 aa).

The S4 RNA-binding domain maps to 93-155; it reads RRLDSIVYRL…SKNLQQIRDA (63 aa).

This sequence belongs to the universal ribosomal protein uS4 family. In terms of assembly, part of the 30S ribosomal subunit. Contacts protein S5. The interaction surface between S4 and S5 is involved in control of translational fidelity.

One of the primary rRNA binding proteins, it binds directly to 16S rRNA where it nucleates assembly of the body of the 30S subunit. In terms of biological role, with S5 and S12 plays an important role in translational accuracy. In Lactobacillus acidophilus (strain ATCC 700396 / NCK56 / N2 / NCFM), this protein is Small ribosomal subunit protein uS4.